Consider the following 395-residue polypeptide: Formate-dependent phosphoribosylglycinamide formyltransferase (395 aa).

N(1)-(5-phospho-beta-D-ribosyl)glycinamide contacts are provided by residues 22-23 (EL) and Glu-82. ATP contacts are provided by residues Arg-115, Lys-156, 161–166 (SSGKGQ), 196–199 (EGFI), and Glu-204. One can recognise an ATP-grasp domain in the interval 120-309 (RLAAETLGLP…EFALHARAIL (190 aa)). Mg(2+)-binding residues include Glu-268 and Glu-280. Residues Asp-287, Lys-356, and 363–364 (RR) each bind N(1)-(5-phospho-beta-D-ribosyl)glycinamide.

This sequence belongs to the PurK/PurT family. In terms of assembly, homodimer.

It carries out the reaction N(1)-(5-phospho-beta-D-ribosyl)glycinamide + formate + ATP = N(2)-formyl-N(1)-(5-phospho-beta-D-ribosyl)glycinamide + ADP + phosphate + H(+). It functions in the pathway purine metabolism; IMP biosynthesis via de novo pathway; N(2)-formyl-N(1)-(5-phospho-D-ribosyl)glycinamide from N(1)-(5-phospho-D-ribosyl)glycinamide (formate route): step 1/1. Involved in the de novo purine biosynthesis. Catalyzes the transfer of formate to 5-phospho-ribosyl-glycinamide (GAR), producing 5-phospho-ribosyl-N-formylglycinamide (FGAR). Formate is provided by PurU via hydrolysis of 10-formyl-tetrahydrofolate. The chain is Formate-dependent phosphoribosylglycinamide formyltransferase from Stenotrophomonas maltophilia (strain K279a).